We begin with the raw amino-acid sequence, 688 residues long: Complement C1s-1 subcomponent (688 aa).

The N-terminal stretch at 1-15 is a signal peptide; the sequence is MWCLVLFSLLASFSA. In terms of domain architecture, CUB 1 spans 16–130; it reads EPTMHGEILS…TGFAAYYTAI (115 aa). 6 residues coordinate Ca(2+): E60, D68, D113, D131, I132, and E134. Cysteines 65 and 83 form a disulfide. The EGF-like; calcium-binding domain maps to 131 to 172; that stretch reads DINECTDFTDVPCSHFCNNFIGGYFCSCPPEYFLHDDMRNCG. 3 disulfides stabilise this stretch: C135–C147, C143–C156, and C158–C171. Residues N149, F150, and G153 each coordinate Ca(2+). Residue N149 is modified to (3R)-3-hydroxyasparagine. N174 carries an N-linked (GlcNAc...) asparagine glycan. Residues C175 and C202 are joined by a disulfide bond. Positions 175–290 constitute a CUB 2 domain; it reads CSGDVFTALI…KGWKLRYHGD (116 aa). 5 residues coordinate Ca(2+): E226, D236, D275, G278, and Q279. C234 and C251 are disulfide-bonded. Sushi domains are found at residues 292 to 356 and 357 to 423; these read ISCA…KCQP and VYCG…RCIP. Cystine bridges form between C294–C341, C321–C354, C359–C403, C386–C421, C425–C549, C595–C618, and C627–C659. A Peptidase S1 domain is found at 438–680; sequence IFGGQPAKIE…YVDWILKTMQ (243 aa). Catalysis depends on charge relay system residues H475 and D529. The active-site Charge relay system is S631. Residue N641 is glycosylated (N-linked (GlcNAc...) asparagine).

This sequence belongs to the peptidase S1 family. Core component of the complement C1 complex, a calcium-dependent complex composed of 1 molecule of the C1Q subcomplex, 2 molecules of C1R and 2 molecules of C1S. The C1Q subcomplex is composed 18 subunits: 3 chains of C1QA, C1QB, and C1QC trimerize to form 6 collagen-like triple helices connected to six globular ligand-recognition modules. In terms of processing, cleaved and activated by C1R to generate Complement C1s subcomponent heavy and light chains. The iron and 2-oxoglutarate dependent 3-hydroxylation of aspartate and asparagine is (R) stereospecific within EGF domains. Predominantly expressed in liver.

The protein localises to the secreted. It is found in the cell surface. The catalysed reaction is Cleavage of Arg-|-Ala bond in complement component C4 to form C4a and C4b, and Lys(or Arg)-|-Lys bond in complement component C2 to form C2a and C2b: the 'classical' pathway C3 convertase.. Its activity is regulated as follows. Cleaved and activated by C1R. Immunoglobulin-binding promotes autoactivation of C1R, which results in the cleavage of the Arg-Ile bond in the catalytic domain. Inhibited by C1 inhibitor (SERPING1). Functionally, component of the complement C1 complex, a multiprotein complex that initiates the classical pathway of the complement system, a cascade of proteins that leads to phagocytosis and breakdown of pathogens and signaling that strengthens the adaptive immune system. C1S is activated following association of the C1 complex with immunoglobulins (IgG or IgM) complexed with antigens to form antigen-antibody complexes on the surface of pathogens. C1S is cleaved and activated by C1R to generate C1s subcomponent heavy and light chains. C1s subcomponent light chain then cleaves and activates C2 and C4, the next components of the classical complement pathway. Serine protease component of the complement C1 complex, which catalyzes cleavage and activation of C2 and C4, the next components of the classical complement pathway. Also cleaves IGFBP5 and thereby inhibits the trophic effects of IGF1. The sequence is that of Complement C1s-1 subcomponent from Mus musculus (Mouse).